Consider the following 283-residue polypeptide: 1-acyl-sn-glycerol-3-phosphate acyltransferase alpha (283 aa).

The N-terminal stretch at 1 to 26 (MDLWPGAWMLLLLLFLLLLFLLPTLW) is a signal peptide. Topologically, residues 27–37 (FCSPSAKYFFK) are lumenal. Residues 38–58 (MAFYNGWILFLAVLAIPVCAV) traverse the membrane as a helical segment. Residues 59 to 127 (RGRNVENMKI…PGRCVPIAKR (69 aa)) lie on the Cytoplasmic side of the membrane. Residues 104–109 (HQSSLD) carry the HXXXXD motif motif. The chain crosses the membrane as a helical span at residues 128 to 148 (ELLWAGSAGLACWLAGVIFID). Over 149–283 (RKRTGDAISV…DYLKKPGGGG (135 aa)) the chain is Lumenal. The EGTR motif motif lies at 178–181 (EGTR).

This sequence belongs to the 1-acyl-sn-glycerol-3-phosphate acyltransferase family. Widely expressed. Expressed in adipose tissue and at high levels in testis and pancreas. Expressed at lower levels in tissues such as heart, brain, placenta, kidney, lung, spleen, thymus, prostate, ovary, intestine, colon, leukocyte and liver.

It is found in the endoplasmic reticulum membrane. The enzyme catalyses a 1-acyl-sn-glycero-3-phosphate + an acyl-CoA = a 1,2-diacyl-sn-glycero-3-phosphate + CoA. The catalysed reaction is 1-(9Z-octadecenoyl)-sn-glycero-3-phosphate + (9Z)-octadecenoyl-CoA = 1,2-di-(9Z-octadecenoyl)-sn-glycero-3-phosphate + CoA. It catalyses the reaction 1-(9Z-octadecenoyl)-sn-glycero-3-phosphate + hexadecanoyl-CoA = 1-(9Z)-octadecenoyl-2-hexadecanoyl-sn-glycero-3-phosphate + CoA. It carries out the reaction heptadecanoyl-CoA + 1-(9Z-octadecenoyl)-sn-glycero-3-phosphate = 1-(9Z)-octadecenoyl-2-heptadecanoyl-sn-glycero-3-phosphate + CoA. The enzyme catalyses 1-(9Z-octadecenoyl)-sn-glycero-3-phosphate + octadecanoyl-CoA = 1-(9Z-octadecenoyl)-2-octadecanoyl-sn-glycero-3-phosphate + CoA. The catalysed reaction is 1-(9Z-octadecenoyl)-sn-glycero-3-phosphate + (9Z,12Z)-octadecadienoyl-CoA = 1-(9Z)-octadecenoyl-2-(9Z,12Z)-octadecadienoyl-sn-glycero-3-phosphate + CoA. It catalyses the reaction 1-(9Z-octadecenoyl)-sn-glycero-3-phosphate + tetradecanoyl-CoA = 1-(9Z)-octadecenoyl-2-tetradecanoyl-sn-glycero-3-phosphate + CoA. It carries out the reaction pentadecanoyl-CoA + 1-(9Z-octadecenoyl)-sn-glycero-3-phosphate = 1-(9Z)-octadecenoyl-2-pentadecanoyl-sn-glycero-3-phosphate + CoA. The enzyme catalyses 1-hexadecanoyl-sn-glycero-3-phosphate + (9Z)-octadecenoyl-CoA = 1-hexadecanoyl-2-(9Z-octadecenoyl)-sn-glycero-3-phosphate + CoA. The catalysed reaction is 1-(9Z,12Z,15Z)-octadecatrienoyl-sn-glycero-3-phosphate + (9Z)-octadecenoyl-CoA = 1-(9Z,12Z,15Z)-octadecatrienoyl-2-(9Z)-octadecenoyl-sn-glycero-3-phosphate + CoA. It catalyses the reaction 1-(6Z,9Z,12Z-octadecatrienoyl)-sn-glycero-3-phosphate + (9Z)-octadecenoyl-CoA = (6Z,9Z,12Z)-octadecatrienoyl-2-(9Z)-octadecenoyl-sn-glycero-3-phosphate + CoA. It carries out the reaction 1-eicosanoyl-sn-glycero-3-phosphate + (9Z)-octadecenoyl-CoA = 1-eicosanoyl-2-(9Z)-octadecenoyl-sn-glycero-3-phosphate + CoA. The enzyme catalyses 1-tetradecanoyl-sn-glycerol 3-phosphate + (9Z)-octadecenoyl-CoA = 1-tetradecanoyl-2-(9Z)-octadecenoyl-sn-glycero-3-phosphate + CoA. The catalysed reaction is 1-(9Z-octadecenoyl)-sn-glycero-3-phosphate + (5Z,8Z,11Z,14Z)-eicosatetraenoyl-CoA = 1-(9Z)-octadecenoyl-2-(5Z,8Z,11Z,14Z)-eicosatetraenoyl-sn-glycero-3-phosphate + CoA. It catalyses the reaction 1-(9Z-octadecenoyl)-sn-glycero-3-phosphate + dodecanoyl-CoA = 1-(9Z)-octadecenoyl-2-dodecanoyl-sn-glycero-3-phosphate + CoA. It carries out the reaction (6Z)-octadecenoyl-CoA + 1-(9Z-octadecenoyl)-sn-glycero-3-phosphate = 1-(9Z)-octadecenoyl-2-(6Z)-octadecenoyl-sn-glycero-3-phosphate + CoA. The enzyme catalyses (11Z)-octadecenoyl-CoA + 1-(9Z-octadecenoyl)-sn-glycero-3-phosphate = 1-(9Z)-octadecenoyl-2-(11Z)-octadecenoyl-sn-glycero-3-phosphate + CoA. The catalysed reaction is (9Z)-hexadecenoyl-CoA + 1-(9Z-octadecenoyl)-sn-glycero-3-phosphate = 1-(9Z-octadecenoyl)-2-(9Z-hexadecenoyl)-sn-glycero-3-phosphate + CoA. It participates in phospholipid metabolism; CDP-diacylglycerol biosynthesis; CDP-diacylglycerol from sn-glycerol 3-phosphate: step 2/3. Functionally, converts 1-acyl-sn-glycerol-3-phosphate (lysophosphatidic acid or LPA) into 1,2-diacyl-sn-glycerol-3-phosphate (phosphatidic acid or PA) by incorporating an acyl moiety at the sn-2 position of the glycerol backbone. This is 1-acyl-sn-glycerol-3-phosphate acyltransferase alpha (AGPAT1) from Homo sapiens (Human).